Here is a 140-residue protein sequence, read N- to C-terminus: Nucleoside diphosphate kinase (140 aa).

6 residues coordinate ATP: K9, F57, R85, T91, R102, and N112. H115 functions as the Pros-phosphohistidine intermediate in the catalytic mechanism.

The protein belongs to the NDK family. As to quaternary structure, homotetramer. It depends on Mg(2+) as a cofactor.

It localises to the cytoplasm. The catalysed reaction is a 2'-deoxyribonucleoside 5'-diphosphate + ATP = a 2'-deoxyribonucleoside 5'-triphosphate + ADP. It catalyses the reaction a ribonucleoside 5'-diphosphate + ATP = a ribonucleoside 5'-triphosphate + ADP. Its function is as follows. Major role in the synthesis of nucleoside triphosphates other than ATP. The ATP gamma phosphate is transferred to the NDP beta phosphate via a ping-pong mechanism, using a phosphorylated active-site intermediate. The polypeptide is Nucleoside diphosphate kinase (Chlorobaculum tepidum (strain ATCC 49652 / DSM 12025 / NBRC 103806 / TLS) (Chlorobium tepidum)).